Consider the following 263-residue polypeptide: 3-methyl-2-oxobutanoate hydroxymethyltransferase (263 aa).

Residues aspartate 45 and aspartate 84 each contribute to the Mg(2+) site. 3-methyl-2-oxobutanoate contacts are provided by residues 45-46, aspartate 84, and lysine 112; that span reads DS. Glutamate 114 contacts Mg(2+). Glutamate 181 serves as the catalytic Proton acceptor.

It belongs to the PanB family. In terms of assembly, homodecamer; pentamer of dimers. Mg(2+) is required as a cofactor.

It is found in the cytoplasm. The enzyme catalyses 3-methyl-2-oxobutanoate + (6R)-5,10-methylene-5,6,7,8-tetrahydrofolate + H2O = 2-dehydropantoate + (6S)-5,6,7,8-tetrahydrofolate. It participates in cofactor biosynthesis; (R)-pantothenate biosynthesis; (R)-pantoate from 3-methyl-2-oxobutanoate: step 1/2. Catalyzes the reversible reaction in which hydroxymethyl group from 5,10-methylenetetrahydrofolate is transferred onto alpha-ketoisovalerate to form ketopantoate. This chain is 3-methyl-2-oxobutanoate hydroxymethyltransferase, found in Buchnera aphidicola subsp. Acyrthosiphon pisum (strain 5A).